Here is a 129-residue protein sequence, read N- to C-terminus: Fluoride-specific ion channel FluC 2 (129 aa).

4 helical membrane passes run 9–29 (LGTL…RYLL), 37–57 (GTIL…YYVI), 74–94 (MVGA…LSTF), and 100–120 (YLLI…ILGI). Na(+)-binding residues include G76 and T79.

The protein belongs to the fluoride channel Fluc/FEX (TC 1.A.43) family.

It is found in the cell membrane. It catalyses the reaction fluoride(in) = fluoride(out). Na(+) is not transported, but it plays an essential structural role and its presence is essential for fluoride channel function. Functionally, fluoride-specific ion channel. Important for reducing fluoride concentration in the cell, thus reducing its toxicity. The chain is Fluoride-specific ion channel FluC 2 from Ligilactobacillus salivarius (strain UCC118) (Lactobacillus salivarius).